Here is a 325-residue protein sequence, read N- to C-terminus: Heme A synthase (325 aa).

5 consecutive transmembrane segments (helical) span residues 6–26 (WLAVCILLILSMVSIGGFTRL), 88–108 (LVGRILGLVFFIGLVYFFVVG), 116–136 (LRLCFALVLGVIQGFVGWYMV), 155–175 (LFCASLLFMVLVYEFLSPTVI), and 184–204 (LVGCSLMFLLSMQIILGGLVA). Histidine 246 contributes to the heme binding site. Transmembrane regions (helical) follow at residues 248–268 (MSAFLLTFICLVCLVISFFYD), 275–295 (VFLVASMMLLQMFFGVLTLLF), and 297–317 (IPIDIALLHQIMAFILLGICV). Histidine 305 serves as a coordination point for heme.

It belongs to the COX15/CtaA family. Type 2 subfamily. As to quaternary structure, interacts with CtaB. Heme b serves as cofactor.

It localises to the cell membrane. The catalysed reaction is Fe(II)-heme o + 2 A + H2O = Fe(II)-heme a + 2 AH2. It participates in porphyrin-containing compound metabolism; heme A biosynthesis; heme A from heme O: step 1/1. Functionally, catalyzes the conversion of heme O to heme A by two successive hydroxylations of the methyl group at C8. The first hydroxylation forms heme I, the second hydroxylation results in an unstable dihydroxymethyl group, which spontaneously dehydrates, resulting in the formyl group of heme A. The sequence is that of Heme A synthase from Neorickettsia sennetsu (strain ATCC VR-367 / Miyayama) (Ehrlichia sennetsu).